The primary structure comprises 768 residues: Transferrin receptor protein 1 (768 aa).

Residues 1 to 68 lie on the Cytoplasmic side of the membrane; it reads MMDQARSAFS…VAKPKRLNGY (68 aa). Residues 1–70 form a mediates interaction with SH3BP4 region; it reads MMDQARSAFS…KPKRLNGYVC (70 aa). Phosphoserine is present on residues serine 10 and serine 19. The residue at position 20 (tyrosine 20) is a Phosphotyrosine. The Endocytosis signal motif lies at 20-23; the sequence is YTRF. The residue at position 21 (threonine 21) is a Phosphothreonine. Position 24 is a phosphoserine (serine 24). The short motif at 61 to 64 is the Stop-transfer sequence element; the sequence is KPKR. Residues 69-89 traverse the membrane as a helical segment; that stretch reads VCYGIIAVITFFLIGFMIGYL. A lipid anchor (S-palmitoyl cysteine) is attached at cysteine 70. Topologically, residues 90–768 are extracellular; that stretch reads AYCKRVESKT…GDIWDIDNEF (679 aa). In terms of domain architecture, PA spans 231 to 321; it reads SKATTVTGKL…GTGDPYTPGF (91 aa). Residues asparagine 259 and asparagine 325 are each glycosylated (N-linked (GlcNAc...) asparagine). Positions 577–768 are ligand-binding; sequence TMDTYDVLSK…GDIWDIDNEF (192 aa). Residues 654-656 carry the Cell attachment site motif; sequence RGD. Asparagine 730 and asparagine 735 each carry an N-linked (GlcNAc...) asparagine glycan.

The protein belongs to the peptidase M28 family. M28B subfamily. As to quaternary structure, homodimer; disulfide-linked. Binds one transferrin or HFE molecule per subunit. Interacts with SH3BP4. Interacts with SH3BP3. Interacts with STEAP3; facilitates TFRC endocytosis in erythroid precursor cells. Stearoylated by ZDHHC6 which inhibits TFRC-mediated activation of the JNK pathway and promotes mitochondrial fragmentation. Stearoylation does not affect iron uptake.

It is found in the cell membrane. The protein localises to the melanosome. Cellular uptake of iron occurs via receptor-mediated endocytosis of ligand-occupied transferrin receptor into specialized endosomes. Endosomal acidification leads to iron release. The apotransferrin-receptor complex is then recycled to the cell surface with a return to neutral pH and the concomitant loss of affinity of apotransferrin for its receptor. Transferrin receptor is necessary for development of erythrocytes and the nervous system. Positively regulates T and B cell proliferation through iron uptake. Acts as a lipid sensor that regulates mitochondrial fusion by regulating activation of the JNK pathway. When dietary levels of stearate (C18:0) are low, promotes activation of the JNK pathway, resulting in HUWE1-mediated ubiquitination and subsequent degradation of the mitofusin MFN2 and inhibition of mitochondrial fusion. When dietary levels of stearate (C18:0) are high, TFRC stearoylation inhibits activation of the JNK pathway and thus degradation of the mitofusin MFN2. Mediates uptake of NICOL1 into fibroblasts where it may regulate extracellular matrix production. The protein is Transferrin receptor protein 1 (TFRC) of Sus scrofa (Pig).